The primary structure comprises 348 residues: Protein RecA (348 aa).

Position 67–74 (67–74) interacts with ATP; it reads GPESSGKT.

Belongs to the RecA family.

The protein resides in the cytoplasm. Can catalyze the hydrolysis of ATP in the presence of single-stranded DNA, the ATP-dependent uptake of single-stranded DNA by duplex DNA, and the ATP-dependent hybridization of homologous single-stranded DNAs. It interacts with LexA causing its activation and leading to its autocatalytic cleavage. This chain is Protein RecA, found in Cutibacterium acnes (Propionibacterium acnes).